A 362-amino-acid chain; its full sequence is Sulfate/thiosulfate import ATP-binding protein CysA (362 aa).

The 231-residue stretch at 13–243 (ITVRDAYKRY…PTNAFVMSFL (231 aa)) folds into the ABC transporter domain. 45–52 (GPSGSGKS) is a binding site for ATP.

This sequence belongs to the ABC transporter superfamily. Sulfate/tungstate importer (TC 3.A.1.6) family. As to quaternary structure, the complex is composed of two ATP-binding proteins (CysA), two transmembrane proteins (CysT and CysW) and a solute-binding protein (CysP).

It is found in the cell membrane. It carries out the reaction sulfate(out) + ATP + H2O = sulfate(in) + ADP + phosphate + H(+). The catalysed reaction is thiosulfate(out) + ATP + H2O = thiosulfate(in) + ADP + phosphate + H(+). In terms of biological role, part of the ABC transporter complex CysAWTP involved in sulfate/thiosulfate import. Responsible for energy coupling to the transport system. This chain is Sulfate/thiosulfate import ATP-binding protein CysA, found in Mycolicibacterium paratuberculosis (strain ATCC BAA-968 / K-10) (Mycobacterium paratuberculosis).